A 130-amino-acid polypeptide reads, in one-letter code: uncharacterized protein (130 aa).

The protein belongs to the HesB/IscA family.

This is an uncharacterized protein from Buchnera aphidicola subsp. Acyrthosiphon pisum (strain APS) (Acyrthosiphon pisum symbiotic bacterium).